The chain runs to 687 residues: Polyphosphate kinase (687 aa).

ATP is bound at residue Asn-45. Residues Arg-373 and Arg-403 each contribute to the Mg(2+) site. Residue His-433 is the Phosphohistidine intermediate of the active site. 3 residues coordinate ATP: Tyr-466, Arg-562, and His-590. One can recognise a PLD phosphodiesterase domain in the interval 585-615 (DRFLEHDRVYVFENKGDKLVYLSSADWMTRN).

It belongs to the polyphosphate kinase 1 (PPK1) family. Mg(2+) serves as cofactor. An intermediate of this reaction is the autophosphorylated ppk in which a phosphate is covalently linked to a histidine residue through a N-P bond.

The catalysed reaction is [phosphate](n) + ATP = [phosphate](n+1) + ADP. Functionally, catalyzes the reversible transfer of the terminal phosphate of ATP to form a long-chain polyphosphate (polyP). The chain is Polyphosphate kinase from Yersinia pestis.